The following is a 389-amino-acid chain: Ethanolamine-phosphate cytidylyltransferase (389 aa).

CTP is bound by residues 221–222 (AF), 229–232 (HVDF), Lys259, 307–310 (HGKT), and 336–340 (SGNDL). Phosphothreonine is present on residues Thr341 and Thr342.

It belongs to the cytidylyltransferase family.

The catalysed reaction is phosphoethanolamine + CTP + H(+) = CDP-ethanolamine + diphosphate. It participates in phospholipid metabolism; phosphatidylethanolamine biosynthesis; phosphatidylethanolamine from ethanolamine: step 2/3. Functionally, ethanolamine-phosphate cytidylyltransferase that catalyzes the second step in the synthesis of phosphatidylethanolamine (PE) from ethanolamine via the CDP-ethanolamine pathway. Phosphatidylethanolamine is a dominant inner-leaflet phospholipid in cell membranes, where it plays a role in membrane function by structurally stabilizing membrane-anchored proteins, and participates in important cellular processes such as cell division, cell fusion, blood coagulation, and apoptosis. The protein is Ethanolamine-phosphate cytidylyltransferase (PCYT2) of Bos taurus (Bovine).